The sequence spans 544 residues: MSIFIGGAWPYANGSLHLGHIASLLPGDILARYYRAKGENVLYVSGSDCNGTPIAIRAKQEGVTAKEIANKYHEEFERCFRNLGFTYDCYTRTDSEHHHETVQNVFLRLLEEGHIYKKTVEQAYCETCTQFLPDCYVEGVCPHCHEEARGDQCDACSAILDPLDLLEKKCKLCGSTPSIQETEHFYFALHTFQEQIKRAVEIAKQTGTWRDNAIQLTERYVKEGLLDRAVSRDLPIGVPIPVEGYEDKKIYVWIEAVTGYYSASKHWAEETGKDDREFWDGEAKTYYVHGKDNIPFHSVIWPAVLLGIGEGTIPRHIVSNEYLTVEKRKLSTSKNWAVWVPDILERYDPDSIRYFLIVNAPENRDTDFSWREFIYSHNSELLGAYGNFVNRTLKFIEKYYGGIMPKGSIDVELKDKIERLYKHVGEAIEQTKFKVALESIFDAVRFANKYFDERQPWKEREDDPVSCEETIYNCVYLIANFANLLEPFLPFSSERIRNTLSIVNRNWEPQHTLPSRIDSVQPLFERIDVKQIECELEKLYGAVK.

The 'HIGH' region motif lies at 10–20 (PYANGSLHLGH). The Zn(2+) site is built by cysteine 141, cysteine 144, cysteine 153, and cysteine 156. The short motif at 329-333 (KLSTS) is the 'KMSKS' region element. Threonine 332 lines the ATP pocket.

This sequence belongs to the class-I aminoacyl-tRNA synthetase family. MetG type 1 subfamily. Monomer. It depends on Zn(2+) as a cofactor.

The protein localises to the cytoplasm. The catalysed reaction is tRNA(Met) + L-methionine + ATP = L-methionyl-tRNA(Met) + AMP + diphosphate. Functionally, is required not only for elongation of protein synthesis but also for the initiation of all mRNA translation through initiator tRNA(fMet) aminoacylation. The chain is Methionine--tRNA ligase 2 from Bacillus anthracis.